The following is a 306-amino-acid chain: Grixazone synthase (306 aa).

His-39, His-58, His-67, His-222, His-226, and His-248 together coordinate Cu(2+).

The protein belongs to the tyrosinase family. It depends on Cu(2+) as a cofactor.

The enzyme catalyses 2 3-amino-4-hydroxybenzoate + N-acetyl-L-cysteine + 2 O2 + H(+) = grixazone B + CO2 + 4 H2O. It catalyses the reaction 2 3-amino-4-hydroxybenzaldehyde + N-acetyl-L-cysteine + 2 O2 = grixazone A + formate + 3 H2O + H(+). It carries out the reaction 4 2-aminophenol + 3 O2 = 2 2-aminophenoxazin-3-one + 6 H2O. Its activity is regulated as follows. Inhibited by 3-amino-4-hydroxybenzensulfonic acid, 4-hydroxy-3-nitrobenzaldehyde, L-tyrosine, p-hydroxybenzaldehyde. Activated by the copper chaperone GriE. Its function is as follows. Involved in the biosynthesis of the parasiticide antibiotic grixazone. Catalyzes the oxidation of 3-amino-4-hydroxybenzoate (3,4-AHBOA) to yield the corresponding quinone imine which is then non-enzymatically conjugated with the thiol group of N-acetylcysteine. The resultant compound is oxidized to its quinone imine enzymatically and is then dimerized non-enzymatically with another quinone imine oxidized by GriF to yield grixazone B. 3-amino-4-hydroxybenzaldehyde (3,4-AHBAL) can also be used as substrate to yield grixazone A. In the grixazone biosynthetic pathway, it can also function as an o-aminophenol oxidase that catalyzes the formation of the phenoxazinone chromophore from alpha-aminophenol. It can also use 2-amino-4-methylphenol, and to a lesser extent, 3,4-dihydroxybenzaldehyde, catechol and 3,4-dihydroxy-L-phenylalanine (L-DOPA) as substrates. In contrast to tyrosinases, it does not display monophenolase activity. The protein is Grixazone synthase of Streptomyces griseus subsp. griseus (strain JCM 4626 / CBS 651.72 / NBRC 13350 / KCC S-0626 / ISP 5235).